A 310-amino-acid chain; its full sequence is Protease HtpX homolog (310 aa).

Transmembrane regions (helical) follow at residues 16–36 (NAVLATYCVIFAFIGLLVDVI) and 55–75 (IFPTITIIMFLVAFVIIVVCI). His-166 serves as a coordination point for Zn(2+). Glu-167 is an active-site residue. His-170 lines the Zn(2+) pocket. The next 2 helical transmembrane spans lie at 182 to 202 (VGILSNIMLLVANFSVYFFMG) and 214 to 234 (MILLVLQIILPFLTLLLQMYL). Residue Glu-239 participates in Zn(2+) binding.

It belongs to the peptidase M48B family. Requires Zn(2+) as cofactor.

The protein resides in the cell inner membrane. The chain is Protease HtpX homolog from Helicobacter pylori (strain Shi470).